We begin with the raw amino-acid sequence, 245 residues long: Orotidine 5'-phosphate decarboxylase (245 aa).

Residues aspartate 22, lysine 44, 71–80 (DLKFHDIPNT), threonine 131, arginine 192, glutamine 201, glycine 221, and arginine 222 contribute to the substrate site. The active-site Proton donor is the lysine 73.

This sequence belongs to the OMP decarboxylase family. Type 1 subfamily. Homodimer.

The catalysed reaction is orotidine 5'-phosphate + H(+) = UMP + CO2. It participates in pyrimidine metabolism; UMP biosynthesis via de novo pathway; UMP from orotate: step 2/2. In terms of biological role, catalyzes the decarboxylation of orotidine 5'-monophosphate (OMP) to uridine 5'-monophosphate (UMP). This chain is Orotidine 5'-phosphate decarboxylase, found in Shigella dysenteriae serotype 1 (strain Sd197).